A 228-amino-acid polypeptide reads, in one-letter code: LOB domain-containing protein 30 (228 aa).

The LOB domain occupies 16 to 118; it reads GPCGACKFLR…TELSYLQAHL (103 aa). Residues 188–228 are disordered; sequence SNMGGGGELQALAREFIHGGQMPAQPSPGTSGSASSVIKRE. A compositionally biased stretch (polar residues) spans 214 to 228; it reads SPGTSGSASSVIKRE.

This sequence belongs to the LOB domain-containing protein family. In terms of tissue distribution, expressed in roots, stems, leaves and flowers. Expressed in vascular tissues of hypocotyls, leaves, roots, developing floral organs and siliques.

Its function is as follows. Involved in the positive regulation of tracheary element (TE) differentiation. Involved in a positive feedback loop that maintains or promotes NAC030/VND7 expression that regulates TE differentiation-related genes. This Arabidopsis thaliana (Mouse-ear cress) protein is LOB domain-containing protein 30 (LBD30).